A 1214-amino-acid chain; its full sequence is Brassinosteroid LRR receptor kinase BRL3 (1214 aa).

The signal sequence occupies residues Met1 to Ala29. Residue Asn61 is glycosylated (N-linked (GlcNAc...) asparagine). Positions Cys69 to Cys76 match the Cys pair 1 motif. LRR repeat units lie at residues Leu103 to Arg127, Pro131 to Ser155, Cys156 to Pro177, Pro178 to Gly202, His204 to Glu228, Ser230 to Met250, Pro252 to Gly276, Cys277 to Cys302, Arg303 to Val325, Leu327 to Leu351, Lys353 to Gln375, Arg377 to Asn400, Ile401 to Cys427, Leu429 to Ser451, Leu452 to Cys476, Asn478 to Leu500, Lys502 to Ser525, Thr526 to Cys549, Val550 to Asn572, Leu573 to Cys597, Asn599 to Gln621, and Gly650 to Ser673. N-linked (GlcNAc...) asparagine glycosylation is found at Asn145, Asn163, Asn197, and Asn210. Residues Asn254, Asn264, and Asn279 are each glycosylated (N-linked (GlcNAc...) asparagine). Residues Asn400 and Asn413 are each glycosylated (N-linked (GlcNAc...) asparagine). Residue Asn466 is glycosylated (N-linked (GlcNAc...) asparagine). 2 N-linked (GlcNAc...) asparagine glycosylation sites follow: Asn512 and Asn524. N-linked (GlcNAc...) asparagine glycosylation is present at Asn561. Tyr678 contacts brassinolide. 4 LRR repeats span residues Asn689 to Asn712, Met713 to Gly736, Lys738 to Cys760, and His762 to Thr786. The short motif at Cys799–Cys806 is the Cys pair 2 element. The chain crosses the membrane as a helical span at residues Ser829–Tyr849. Residues Phe913 to Leu1196 enclose the Protein kinase domain. ATP contacts are provided by residues Ile919–Val927, Lys941, Glu987–Met989, Ser993–Phe996, Asp1039–Asn1044, and Asp1057. Asp1039 functions as the Proton acceptor in the catalytic mechanism.

This sequence belongs to the protein kinase superfamily. Ser/Thr protein kinase family. In terms of tissue distribution, highly expressed in roots. Expressed at low levels in shoots.

It is found in the cell membrane. It carries out the reaction L-seryl-[protein] + ATP = O-phospho-L-seryl-[protein] + ADP + H(+). The catalysed reaction is L-threonyl-[protein] + ATP = O-phospho-L-threonyl-[protein] + ADP + H(+). In terms of biological role, may be involved in brassenosteroid (BR) perception in roots. This chain is Brassinosteroid LRR receptor kinase BRL3, found in Oryza sativa subsp. japonica (Rice).